We begin with the raw amino-acid sequence, 716 residues long: Delta-1-pyrroline-5-carboxylate synthase 1 (716 aa).

The segment at 1 to 296 (MASVDPSRSF…WESSKDVSTR (296 aa)) is glutamate 5-kinase. 3 residues coordinate substrate: serine 60, aspartate 157, and asparagine 176. Residues 196–197 (SD), 202–207 (YSGPPS), and 236–242 (RGGMTAK) each bind ATP. The segment at 297-716 (EMAVAARDCS…VYTHKSLPLQ (420 aa)) is gamma-glutamyl phosphate reductase.

In the N-terminal section; belongs to the glutamate 5-kinase family. This sequence in the C-terminal section; belongs to the gamma-glutamyl phosphate reductase family. As to expression, expressed at high levels in leaves.

It carries out the reaction L-glutamate + ATP = L-glutamyl 5-phosphate + ADP. The enzyme catalyses L-glutamate 5-semialdehyde + phosphate + NADP(+) = L-glutamyl 5-phosphate + NADPH + H(+). Its pathway is amino-acid biosynthesis; L-proline biosynthesis; L-glutamate 5-semialdehyde from L-glutamate: step 1/2. The protein operates within amino-acid biosynthesis; L-proline biosynthesis; L-glutamate 5-semialdehyde from L-glutamate: step 2/2. Feedback regulated by proline. Functionally, P5CS plays a key role in proline biosynthesis, leading to osmoregulation in plants. Involved in abiotic stress tolerance. The protein is Delta-1-pyrroline-5-carboxylate synthase 1 of Oryza sativa subsp. japonica (Rice).